We begin with the raw amino-acid sequence, 334 residues long: Spermidine synthase 1 (334 aa).

The disordered stretch occupies residues 1–37 (MAAPENTLHSTDSPLKRQREDEVNGVSDTLSKEPQPN). Positions 26-37 (VSDTLSKEPQPN) are enriched in polar residues. Residues 44-281 (PGWFSEISPM…GMIGFMLCST (238 aa)) form the PABS domain. Q75 is an S-adenosyl 3-(methylsulfanyl)propylamine binding site. Y105 provides a ligand contact to putrescine. Residues Q106, D130, E150, 181–182 (DG), and D200 contribute to the S-adenosyl 3-(methylsulfanyl)propylamine site. The active-site Proton acceptor is the D200. Putrescine contacts are provided by residues 200 to 203 (DSSD) and Y269.

It belongs to the spermidine/spermine synthase family.

The catalysed reaction is S-adenosyl 3-(methylsulfanyl)propylamine + putrescine = S-methyl-5'-thioadenosine + spermidine + H(+). It functions in the pathway amine and polyamine biosynthesis; spermidine biosynthesis; spermidine from putrescine: step 1/1. The polypeptide is Spermidine synthase 1 (SPDSYN1) (Pisum sativum (Garden pea)).